Reading from the N-terminus, the 160-residue chain is uncharacterized protein (160 aa).

Residues 20–152 (EREIWVLYMK…VYEGLSILSR (133 aa)) form the HTH marR-type domain. A DNA-binding region (H-T-H motif) is located at residues 66-89 (VSDIAEKMGASLSNTTGLLDRLEK).

This is an uncharacterized protein from Bacillus subtilis (strain 168).